The following is a 145-amino-acid chain: Sec-independent protein translocase protein TatB (145 aa).

The helical transmembrane segment at 1–21 (MLDVGMTELLCFAIIAILVLG) threads the bilayer.

Belongs to the TatB family. In terms of assembly, the Tat system comprises two distinct complexes: a TatABC complex, containing multiple copies of TatA, TatB and TatC subunits, and a separate TatA complex, containing only TatA subunits. Substrates initially bind to the TatABC complex, which probably triggers association of the separate TatA complex to form the active translocon.

It localises to the cell inner membrane. Part of the twin-arginine translocation (Tat) system that transports large folded proteins containing a characteristic twin-arginine motif in their signal peptide across membranes. Together with TatC, TatB is part of a receptor directly interacting with Tat signal peptides. TatB may form an oligomeric binding site that transiently accommodates folded Tat precursor proteins before their translocation. This is Sec-independent protein translocase protein TatB from Acinetobacter baumannii (strain ATCC 17978 / DSM 105126 / CIP 53.77 / LMG 1025 / NCDC KC755 / 5377).